The primary structure comprises 1456 residues: Sterol 3-beta-glucosyltransferase (1456 aa).

Acidic residues predominate over residues 60–70; that stretch reads ESDEEDGDEVE. Disordered regions lie at residues 60 to 113 and 128 to 156; these read ESDE…SISH and LSPH…TQSE. The span at 71–104 shows a compositional bias: low complexity; the sequence is TPSTTTTAVSPSATMSAPSPTATAPTPHSGTHTP. The span at 137 to 146 shows a compositional bias: basic and acidic residues; it reads SSHEASRRGS. In terms of domain architecture, GRAM 1 spans 200-247; that stretch reads QKLKGFAALDVDEQLIADYPVWLLKNVLIQGHLYITAKHMCFLSYLPR. Residues 251-351 enclose the PH domain; sequence ANIRSGTLVK…WVKALQKEIF (101 aa). Disordered regions lie at residues 462 to 512 and 524 to 776; these read HSAH…PRLP and DKCD…QDTF. Basic and acidic residues predominate over residues 496 to 508; the sequence is QPHERDEKRDSKL. Residues 556 to 567 show a composition bias toward polar residues; that stretch reads LASQRTSSSTLF. Low complexity-rich tracts occupy residues 576–606 and 647–676; these read SQPT…PASA and GGAT…SSPG. Gly residues predominate over residues 677–696; sequence TPGGLGGPGAVGAGGPGVMG. Positions 719 to 735 are enriched in low complexity; sequence APHDPAAAAAAADAAAP. Residues 827–893 form the GRAM 2 domain; it reads ERFQKRFALG…KVVENATKDS (67 aa). Ser-1004, Arg-1005, Asp-1007, Asn-1279, Asn-1307, His-1310, His-1323, Ser-1326, Gly-1327, Thr-1328, Asp-1347, and Gln-1348 together coordinate UDP-alpha-D-glucose.

It belongs to the glycosyltransferase 28 family.

It localises to the cytoplasm. The protein localises to the membrane. The enzyme catalyses a sterol + UDP-alpha-D-glucose = a sterol 3-beta-D-glucoside + UDP + H(+). It carries out the reaction ergosterol + UDP-alpha-D-glucose = ergosteryl 3-beta-D-glucoside + UDP + H(+). In terms of biological role, sterol glycosyltransferase responsible for the glycosylation of ergosterol to form ergosterol-glucoside. This Yarrowia lipolytica (strain CLIB 122 / E 150) (Yeast) protein is Sterol 3-beta-glucosyltransferase.